Reading from the N-terminus, the 417-residue chain is 3-isopropylmalate dehydratase large subunit 2 (417 aa).

[4Fe-4S] cluster-binding residues include Cys298, Cys358, and Cys361.

Belongs to the aconitase/IPM isomerase family. LeuC type 2 subfamily. As to quaternary structure, heterodimer of LeuC and LeuD. The cofactor is [4Fe-4S] cluster.

The catalysed reaction is (2R,3S)-3-isopropylmalate = (2S)-2-isopropylmalate. It functions in the pathway amino-acid biosynthesis; L-leucine biosynthesis; L-leucine from 3-methyl-2-oxobutanoate: step 2/4. Functionally, catalyzes the isomerization between 2-isopropylmalate and 3-isopropylmalate, via the formation of 2-isopropylmaleate. The protein is 3-isopropylmalate dehydratase large subunit 2 of Thermotoga maritima (strain ATCC 43589 / DSM 3109 / JCM 10099 / NBRC 100826 / MSB8).